The following is a 152-amino-acid chain: Histone H2B.9 (152 aa).

Basic and acidic residues-rich tracts occupy residues 1-16 (MAPKAEKKPAAKKPAE) and 34-52 (EKRLPAGKGEKGGAGEGKK). The interval 1-59 (MAPKAEKKPAAKKPAEEEPAAEKAPAAGKKPKAEKRLPAGKGEKGGAGEGKKAGRKKGK) is disordered. Residues lysine 7 and lysine 35 each carry the N6-acetyllysine modification. Lysine 148 is covalently cross-linked (Glycyl lysine isopeptide (Lys-Gly) (interchain with G-Cter in ubiquitin)).

It belongs to the histone H2B family. In terms of assembly, the nucleosome is a histone octamer containing two molecules each of H2A, H2B, H3 and H4 assembled in one H3-H4 heterotetramer and two H2A-H2B heterodimers. The octamer wraps approximately 147 bp of DNA. In terms of processing, can be acetylated to form H2BK6ac and H2BK33ac. Post-translationally, monoubiquitinated by BRE1 to form H2BK143ub1 and deubiquitinated by UBP26. Required for heterochromatic histone H3 di- and trimethylation at H3K4me. May give a specific tag for epigenetic transcriptional activation.

The protein localises to the nucleus. Its subcellular location is the chromosome. Core component of nucleosome. Nucleosomes wrap and compact DNA into chromatin, limiting DNA accessibility to the cellular machineries which require DNA as a template. Histones thereby play a central role in transcription regulation, DNA repair, DNA replication and chromosomal stability. DNA accessibility is regulated via a complex set of post-translational modifications of histones, also called histone code, and nucleosome remodeling. The polypeptide is Histone H2B.9 (H2B.9) (Oryza sativa subsp. indica (Rice)).